A 363-amino-acid chain; its full sequence is Chorismate synthase (363 aa).

NADP(+)-binding residues include arginine 48 and arginine 54. Residues arginine 125–serine 127, asparagine 237–alanine 238, glycine 277, lysine 292–serine 296, and arginine 318 contribute to the FMN site.

It belongs to the chorismate synthase family. In terms of assembly, homotetramer. Requires FMNH2 as cofactor.

It carries out the reaction 5-O-(1-carboxyvinyl)-3-phosphoshikimate = chorismate + phosphate. It functions in the pathway metabolic intermediate biosynthesis; chorismate biosynthesis; chorismate from D-erythrose 4-phosphate and phosphoenolpyruvate: step 7/7. In terms of biological role, catalyzes the anti-1,4-elimination of the C-3 phosphate and the C-6 proR hydrogen from 5-enolpyruvylshikimate-3-phosphate (EPSP) to yield chorismate, which is the branch point compound that serves as the starting substrate for the three terminal pathways of aromatic amino acid biosynthesis. This reaction introduces a second double bond into the aromatic ring system. This Pseudomonas putida (strain GB-1) protein is Chorismate synthase.